A 121-amino-acid polypeptide reads, in one-letter code: Amelogenin (121 aa).

Disordered regions lie at residues 1 to 20 (LHHQ…HALQ) and 32 to 121 (QPMQ…WPAT). The span at 48–58 (SVTPTQHHQSN) shows a compositional bias: polar residues. Residues 59–71 (LPQPAQQPFQPQV) show a composition bias toward low complexity. Positions 85–111 (PAHPMPPMPQPPLPPMFPMQPLPPLLP) are enriched in pro residues.

Belongs to the amelogenin family.

Its subcellular location is the secreted. It is found in the extracellular space. It localises to the extracellular matrix. Its function is as follows. Plays a role in the biomineralization of teeth. Seems to regulate the formation of crystallites during the secretory stage of tooth enamel development. Thought to play a major role in the structural organization and mineralization of developing enamel. This Ornithorhynchus anatinus (Duckbill platypus) protein is Amelogenin (AMEL).